The sequence spans 100 residues: Nucleoid-associated protein jhp_0031 (100 aa).

The protein belongs to the YbaB/EbfC family. Homodimer.

The protein resides in the cytoplasm. The protein localises to the nucleoid. Functionally, binds to DNA and alters its conformation. May be involved in regulation of gene expression, nucleoid organization and DNA protection. The polypeptide is Nucleoid-associated protein jhp_0031 (Helicobacter pylori (strain J99 / ATCC 700824) (Campylobacter pylori J99)).